The chain runs to 448 residues: C4-dicarboxylate transport protein (448 aa).

Transmembrane regions (helical) follow at residues 13–33 (SLYAQVIFAVTIGVLLGHFYP), 49–69 (LIKMIIAPIIFCTVVVGIAGM), 81–101 (LALLYFEVMSTLALVVGLLVV), 149–169 (AFAKGEILQVLLFSVLFGFAL), 193–213 (IVGIIMKVAPIGAFGAMAFTI), 227–247 (LMGAFYLTCLIFVFGVLGIVS), 294–314 (VVGLVIPTGYSFNLDGTSIYL), 336–356 (TLLAVLLLTSKGAAGVTGSGF), and 357–377 (IVLAATLSAVGGVPVAGLALI).

Belongs to the dicarboxylate/amino acid:cation symporter (DAACS) (TC 2.A.23) family.

Its subcellular location is the cell inner membrane. In terms of biological role, responsible for the transport of dicarboxylates such as succinate, fumarate, and malate from the periplasm across the membrane. The polypeptide is C4-dicarboxylate transport protein (Albidiferax ferrireducens (strain ATCC BAA-621 / DSM 15236 / T118) (Rhodoferax ferrireducens)).